The chain runs to 163 residues: S-fimbrial adhesin protein SfaS (163 aa).

A signal peptide spans 1 to 22; sequence MKLKAIILATGLINCIAFSAQA. An intrachain disulfide couples C38 to C75. The interval 138-144 is involved in sialic acid binding; sequence KARAVSK.

It belongs to the fimbrial protein family.

Its subcellular location is the fimbrium. Fimbriae (also called pili), polar filaments radiating from the surface of the bacterium to a length of 0.5-1.5 micrometers and numbering 100-300 per cell, enable bacteria to colonize the epithelium of specific host organs. In terms of biological role, a minor fimbrial subunit, this protein is necessary for full expression of S-specific binding. S-fimbrial adhesins enable pathogenic E.coli causing urinary-tract infections or newborn meningitis to attach to glycoproteins terminating with alpha-sialic acid-(2-3)-beta-Gal. This protein binds to the alpha-sialic acid-(2-3)-beta-Gal and is thus responsible for erythrocyte recognition and hemagglutination. This chain is S-fimbrial adhesin protein SfaS (sfaS), found in Escherichia coli O6:K15:H31 (strain 536 / UPEC).